The following is a 434-amino-acid chain: 4-hydroxy-3-methylbut-2-en-1-yl diphosphate synthase (flavodoxin) (434 aa).

The segment covering 1–15 (MQSEAQSPRSSQICS) has biased composition (polar residues). Residues 1–24 (MQSEAQSPRSSQICSTEPVFGGHQ) are disordered. 4 residues coordinate [4Fe-4S] cluster: Cys-322, Cys-325, Cys-368, and Glu-375.

It belongs to the IspG family. Requires [4Fe-4S] cluster as cofactor.

The catalysed reaction is (2E)-4-hydroxy-3-methylbut-2-enyl diphosphate + oxidized [flavodoxin] + H2O + 2 H(+) = 2-C-methyl-D-erythritol 2,4-cyclic diphosphate + reduced [flavodoxin]. Its pathway is isoprenoid biosynthesis; isopentenyl diphosphate biosynthesis via DXP pathway; isopentenyl diphosphate from 1-deoxy-D-xylulose 5-phosphate: step 5/6. Functionally, converts 2C-methyl-D-erythritol 2,4-cyclodiphosphate (ME-2,4cPP) into 1-hydroxy-2-methyl-2-(E)-butenyl 4-diphosphate. In Burkholderia ambifaria (strain MC40-6), this protein is 4-hydroxy-3-methylbut-2-en-1-yl diphosphate synthase (flavodoxin).